A 119-amino-acid polypeptide reads, in one-letter code: Small ribosomal subunit protein uS10 (119 aa).

It belongs to the universal ribosomal protein uS10 family. Component of the 40S small ribosomal subunit.

It localises to the cytoplasm. Its function is as follows. Component of the small ribosomal subunit. The ribosome is a large ribonucleoprotein complex responsible for the synthesis of proteins in the cell. This chain is Small ribosomal subunit protein uS10 (rps20), found in Xenopus laevis (African clawed frog).